Reading from the N-terminus, the 469-residue chain is Bifunctional protein GlmU (469 aa).

Residues 1–236 (MLNIKLNIVI…ISEINGINDC (236 aa)) are pyrophosphorylase. UDP-N-acetyl-alpha-D-glucosamine contacts are provided by residues 11–14 (LAAG), Lys25, Gln83, 88–89 (GT), 110–112 (YGD), Gly147, Glu161, Asn176, and Asn234. Residue Asp112 coordinates Mg(2+). Residue Asn234 participates in Mg(2+) binding. A linker region spans residues 237-257 (AQLANLERLYQKEQAESLLRI). Positions 258–469 (GVIIADPNRF…KKKIRYNIIY (212 aa)) are N-acetyltransferase. Residues Arg340 and Lys358 each contribute to the UDP-N-acetyl-alpha-D-glucosamine site. His370 serves as the catalytic Proton acceptor. 2 residues coordinate UDP-N-acetyl-alpha-D-glucosamine: Tyr373 and Asn384. Residues Ala387, 393–394 (NY), Ser412, Ala430, and Arg447 each bind acetyl-CoA.

The protein in the N-terminal section; belongs to the N-acetylglucosamine-1-phosphate uridyltransferase family. In the C-terminal section; belongs to the transferase hexapeptide repeat family. In terms of assembly, homotrimer. Mg(2+) is required as a cofactor.

The protein resides in the cytoplasm. The catalysed reaction is alpha-D-glucosamine 1-phosphate + acetyl-CoA = N-acetyl-alpha-D-glucosamine 1-phosphate + CoA + H(+). The enzyme catalyses N-acetyl-alpha-D-glucosamine 1-phosphate + UTP + H(+) = UDP-N-acetyl-alpha-D-glucosamine + diphosphate. It functions in the pathway nucleotide-sugar biosynthesis; UDP-N-acetyl-alpha-D-glucosamine biosynthesis; N-acetyl-alpha-D-glucosamine 1-phosphate from alpha-D-glucosamine 6-phosphate (route II): step 2/2. The protein operates within nucleotide-sugar biosynthesis; UDP-N-acetyl-alpha-D-glucosamine biosynthesis; UDP-N-acetyl-alpha-D-glucosamine from N-acetyl-alpha-D-glucosamine 1-phosphate: step 1/1. It participates in bacterial outer membrane biogenesis; LPS lipid A biosynthesis. Its function is as follows. Catalyzes the last two sequential reactions in the de novo biosynthetic pathway for UDP-N-acetylglucosamine (UDP-GlcNAc). The C-terminal domain catalyzes the transfer of acetyl group from acetyl coenzyme A to glucosamine-1-phosphate (GlcN-1-P) to produce N-acetylglucosamine-1-phosphate (GlcNAc-1-P), which is converted into UDP-GlcNAc by the transfer of uridine 5-monophosphate (from uridine 5-triphosphate), a reaction catalyzed by the N-terminal domain. This is Bifunctional protein GlmU from Baumannia cicadellinicola subsp. Homalodisca coagulata.